The primary structure comprises 337 residues: Glyceraldehyde-3-phosphate dehydrogenase (337 aa).

NAD(+) contacts are provided by residues 11-12 (RI), Asp33, and Lys78. D-glyceraldehyde 3-phosphate is bound by residues 149 to 151 (SCT), Thr180, 209 to 210 (TG), and Arg232. Cys150 (nucleophile) is an active-site residue. Asn314 provides a ligand contact to NAD(+).

Belongs to the glyceraldehyde-3-phosphate dehydrogenase family. Homotetramer.

Its subcellular location is the cytoplasm. It carries out the reaction D-glyceraldehyde 3-phosphate + phosphate + NAD(+) = (2R)-3-phospho-glyceroyl phosphate + NADH + H(+). It participates in carbohydrate degradation; glycolysis; pyruvate from D-glyceraldehyde 3-phosphate: step 1/5. This chain is Glyceraldehyde-3-phosphate dehydrogenase (GPD), found in Lyophyllum shimeji (Hon-shimeji).